Here is a 220-residue protein sequence, read N- to C-terminus: Thiamine-phosphate synthase (220 aa).

Residues 39–43 (QLRDK) and N80 contribute to the 4-amino-2-methyl-5-(diphosphooxymethyl)pyrimidine site. Residues D81 and D100 each coordinate Mg(2+). A 4-amino-2-methyl-5-(diphosphooxymethyl)pyrimidine-binding site is contributed by S119. A 2-[(2R,5Z)-2-carboxy-4-methylthiazol-5(2H)-ylidene]ethyl phosphate-binding site is contributed by 145 to 147 (TPT). K148 lines the 4-amino-2-methyl-5-(diphosphooxymethyl)pyrimidine pocket. Position 176 (G176) interacts with 2-[(2R,5Z)-2-carboxy-4-methylthiazol-5(2H)-ylidene]ethyl phosphate.

This sequence belongs to the thiamine-phosphate synthase family. It depends on Mg(2+) as a cofactor.

It carries out the reaction 2-[(2R,5Z)-2-carboxy-4-methylthiazol-5(2H)-ylidene]ethyl phosphate + 4-amino-2-methyl-5-(diphosphooxymethyl)pyrimidine + 2 H(+) = thiamine phosphate + CO2 + diphosphate. The enzyme catalyses 2-(2-carboxy-4-methylthiazol-5-yl)ethyl phosphate + 4-amino-2-methyl-5-(diphosphooxymethyl)pyrimidine + 2 H(+) = thiamine phosphate + CO2 + diphosphate. It catalyses the reaction 4-methyl-5-(2-phosphooxyethyl)-thiazole + 4-amino-2-methyl-5-(diphosphooxymethyl)pyrimidine + H(+) = thiamine phosphate + diphosphate. It participates in cofactor biosynthesis; thiamine diphosphate biosynthesis; thiamine phosphate from 4-amino-2-methyl-5-diphosphomethylpyrimidine and 4-methyl-5-(2-phosphoethyl)-thiazole: step 1/1. Its function is as follows. Condenses 4-methyl-5-(beta-hydroxyethyl)thiazole monophosphate (THZ-P) and 2-methyl-4-amino-5-hydroxymethyl pyrimidine pyrophosphate (HMP-PP) to form thiamine monophosphate (TMP). The protein is Thiamine-phosphate synthase of Mycobacterium marinum (strain ATCC BAA-535 / M).